The primary structure comprises 90 residues: Antitoxin epsilon 2 (90 aa).

The protein belongs to the epsilon antitoxin family. In terms of assembly, in the presence of the zeta toxin, forms an inactive PezA(2)PezT(2) heterotetramer.

In terms of biological role, antitoxin component of a type II toxin-antitoxin (TA) system. Neutralizes the toxic effect of zeta toxin. Part of a postsegregational killing (PSK) system involved in the killing of plasmid-free cells. Continuous synthesis of the epsilon antitoxin is required to counteract the zeta toxin. The chain is Antitoxin epsilon 2 from Enterococcus faecalis (Streptococcus faecalis).